Here is a 92-residue protein sequence, read N- to C-terminus: Antifungal protein B (92 aa).

An N-terminal signal peptide occupies residues Met1–Ala18. Positions Ser19 to Gln34 are excised as a propeptide. Intrachain disulfides connect Cys42-Cys70, Cys49-Cys77, and Cys62-Cys88.

It belongs to the antifungal protein pafB family.

It localises to the secreted. The protein resides in the host cytoplasm. Its function is as follows. Antifungal protein that acts as an inhibitor of growth of human pathogenic molds and yeasts. This Penicillium rubens (strain ATCC 28089 / DSM 1075 / NRRL 1951 / Wisconsin 54-1255) (Penicillium chrysogenum) protein is Antifungal protein B.